The sequence spans 458 residues: Argininosuccinate lyase (458 aa).

Belongs to the lyase 1 family. Argininosuccinate lyase subfamily.

It localises to the cytoplasm. The catalysed reaction is 2-(N(omega)-L-arginino)succinate = fumarate + L-arginine. Its pathway is amino-acid biosynthesis; L-arginine biosynthesis; L-arginine from L-ornithine and carbamoyl phosphate: step 3/3. The protein is Argininosuccinate lyase of Geobacter sulfurreducens (strain ATCC 51573 / DSM 12127 / PCA).